A 223-amino-acid polypeptide reads, in one-letter code: Bone marrow proteoglycan (223 aa).

A signal peptide spans 1–16; that stretch reads MKFPLLLALLVGGASA. A propeptide spans 17–106 (acidic); sequence LHLSSETSDS…TSLMGDSGCK (90 aa). Positions 20 to 81 are disordered; the sequence is SSETSDSKSP…PGDEGAVSGQ (62 aa). O-linked (GalNAc...) threonine; partial glycosylation occurs at Thr-23. The O-linked (GalNAc...) serine glycan is linked to Ser-24. O-linked (Xyl...) (chondroitin sulfate) serine glycosylation is present at Ser-66. Residues 124 to 223 enclose the C-type lectin domain; sequence SVCRRCYRGT…VKRRPFICSY (100 aa). Cystine bridges form between Cys-126-Cys-221 and Cys-198-Cys-213.

In terms of processing, nitrated.

Its subcellular location is the secreted. In terms of biological role, cytotoxin and helminthotoxin. MBP also induces non-cytolytic histamine release from basophils. It is involved in antiparasitic defense mechanisms and immune hypersensitivity reactions. This chain is Bone marrow proteoglycan (Prg2), found in Mus musculus (Mouse).